The chain runs to 48 residues: Large ribosomal subunit protein bL34c (48 aa).

Positions 18–48 (SGFRSRMATPQGRKTIRNRRKKGRKNLTLRR) are disordered. Residues 31–48 (KTIRNRRKKGRKNLTLRR) show a composition bias toward basic residues.

This sequence belongs to the bacterial ribosomal protein bL34 family.

The protein resides in the plastid. It is found in the chloroplast. This chain is Large ribosomal subunit protein bL34c, found in Phaeodactylum tricornutum (strain CCAP 1055/1).